The primary structure comprises 691 residues: MQGERASLGYLSEALNFEHGSSSSNGVIDHWENIHSLGDNDLQDYMIANSESNTSLANSVYHEQQGLRRFSLGEASSSGTKDEASSHNEQRMETRCFDGRGNEIIDLDPVFAQPSGTNQPVQNVNLNAEYIEIHEDINPYRGRSGFIEANGPGTRVSQPGRSFEENGVGTGSSVEGRRASCKRKALEGSISQSSSGGYHDFQRGESSSWTPGSTVFRPGNGLNISGSLDNGPRGMVSGTVPNFPVSAPNFPVSAIAESSSRNICVRSNPSDHQETVNPSTFAAGTVVRRPVPPSQLNLSRHLPADQHSLDLRPGQSFVVSRNPNSTPVSIPPGSRTMLPPFRWTGSSLVGGTSNSTAPVERNLHLDETRSRSIPGNTLEIPMFAAPEVGNFARSQSSRNVTNGNLNSASSVSRTGSTTSVPPPPPPSSNLAWTSYQNSPHYQRRRTERSELARRSLLSSLAADATNQRSGDHPTLRSLAPPASSDGLVLQPGGDNSQMHNRAYSRAGPLFDRQGDSVVGIPHPLRALAAASRGRSRLMVSQMQNVLDVMRRDANNNNLRLEDVMLLNHSVLFDGATGHDRYRDMRLDVDNMSYEELLALEERIGDVCTGVNEETISNRLKQRKYKSNTKSPQDAEPCCVCQEEYTEGEDMGTLECGHEFHSQCIKEWLKQKNLCPICKTTGLNTAKKRRIA.

5 disordered regions span residues 71-91 (SLGE…NEQR), 151-235 (GPGT…PRGM), 316-336 (SFVV…GSRT), 349-373 (VGGT…SRSI), and 395-501 (QSSR…MHNR). Residues 80–91 (TKDEASSHNEQR) are compositionally biased toward basic and acidic residues. Composition is skewed to polar residues over residues 204–213 (GESSSWTPGS) and 317–328 (FVVSRNPNSTPV). Positions 361 to 370 (RNLHLDETRS) are enriched in basic and acidic residues. Positions 395–406 (QSSRNVTNGNLN) are enriched in polar residues. Low complexity predominate over residues 407 to 419 (SASSVSRTGSTTS). A compositionally biased stretch (polar residues) spans 429-440 (NLAWTSYQNSPH). Residues 454–465 (RSLLSSLAADAT) show a composition bias toward low complexity. The RING-type; atypical zinc finger occupies 637–678 (CCVCQEEYTEGEDMGTLECGHEFHSQCIKEWLKQKNLCPICK).

In terms of tissue distribution, expressed in stems, flowers, green siliques, cauline leaves, seeds and roots.

It carries out the reaction S-ubiquitinyl-[E2 ubiquitin-conjugating enzyme]-L-cysteine + [acceptor protein]-L-lysine = [E2 ubiquitin-conjugating enzyme]-L-cysteine + N(6)-ubiquitinyl-[acceptor protein]-L-lysine.. The protein operates within protein modification; protein ubiquitination. Its function is as follows. Probable E3 ubiquitin-protein ligase that may possess E3 ubiquitin ligase activity in vitro. This Arabidopsis thaliana (Mouse-ear cress) protein is Probable E3 ubiquitin-protein ligase RHG1A.